A 362-amino-acid chain; its full sequence is 3-dehydroquinate synthase (362 aa).

Residues 71–76, 105–109, 129–130, lysine 142, lysine 151, and 169–172 contribute to the NAD(+) site; these read DGEKYK, GVIGD, TT, and CLKT. Zn(2+)-binding residues include glutamate 184, histidine 247, and histidine 264.

This sequence belongs to the sugar phosphate cyclases superfamily. Dehydroquinate synthase family. It depends on Co(2+) as a cofactor. The cofactor is Zn(2+). NAD(+) is required as a cofactor.

It localises to the cytoplasm. The catalysed reaction is 7-phospho-2-dehydro-3-deoxy-D-arabino-heptonate = 3-dehydroquinate + phosphate. It functions in the pathway metabolic intermediate biosynthesis; chorismate biosynthesis; chorismate from D-erythrose 4-phosphate and phosphoenolpyruvate: step 2/7. Functionally, catalyzes the conversion of 3-deoxy-D-arabino-heptulosonate 7-phosphate (DAHP) to dehydroquinate (DHQ). This chain is 3-dehydroquinate synthase, found in Citrobacter koseri (strain ATCC BAA-895 / CDC 4225-83 / SGSC4696).